The following is a 409-amino-acid chain: Dipeptidase 1 (409 aa).

A signal peptide spans 1 to 16 (MWTSWWLWPLVAVCAA). Residues His-36 and Asp-38 each contribute to the Zn(2+) site. The N-linked (GlcNAc...) asparagine glycan is linked to Asn-57. Cys-87 and Cys-170 are oxidised to a cystine. Glu-141 lines the Zn(2+) pocket. His-168 serves as a coordination point for substrate. Zn(2+) is bound by residues His-214 and His-235. An intrachain disulfide couples Cys-242 to Cys-274. Arg-246 serves as a coordination point for substrate. The N-linked (GlcNAc...) asparagine glycan is linked to Asn-279. Asp-304 is a binding site for substrate. Ser-384 carries GPI-anchor amidated serine lipidation. Residues 385–409 (AAPSLHLPPGSLLASLVPLLLLSLP) constitute a propeptide, removed in mature form.

It belongs to the metallo-dependent hydrolases superfamily. Peptidase M19 family. Homodimer; disulfide-linked. Zn(2+) is required as a cofactor.

It localises to the apical cell membrane. The protein resides in the cell projection. It is found in the microvillus membrane. Its subcellular location is the cell membrane. It carries out the reaction an L-aminoacyl-L-amino acid + H2O = 2 an L-alpha-amino acid. It catalyses the reaction leukotriene D4 + H2O = leukotriene E4 + glycine. The enzyme catalyses L-cystine-bis-glycine + 2 H2O = L-cystine + 2 glycine. The catalysed reaction is a beta-lactam + H2O = a substituted beta-amino acid. It carries out the reaction glycyldehydrophenylalanine + H2O = 2,3-didehydrophenylalanine + glycine. Its activity is regulated as follows. Inhibited by L-penicillamine. Inhibited by cilastatin. In terms of biological role, hydrolyzes a wide range of dipeptides. Hydrolyzes the conversion of leukotriene D4 to leukotriene E4. Hydrolyzes cystinyl-bis-glycine (cys-bis-gly) formed during glutathione degradation. Also possesses beta lactamase activity and hydrolytically inactivates beta-lactam antibiotics. Independently of its dipeptidase activity, acts as an adhesion receptor for neutrophil recruitment from bloodstream into inflamed lungs and liver. The sequence is that of Dipeptidase 1 (DPEP1) from Sus scrofa (Pig).